The primary structure comprises 262 residues: 3-methyl-2-oxobutanoate hydroxymethyltransferase (262 aa).

Mg(2+) contacts are provided by aspartate 31 and aspartate 70. 3-methyl-2-oxobutanoate-binding positions include 31–32 (DS), aspartate 70, and lysine 99. Glutamate 101 provides a ligand contact to Mg(2+). Glutamate 168 (proton acceptor) is an active-site residue.

This sequence belongs to the PanB family. Homodecamer; pentamer of dimers. Mg(2+) serves as cofactor.

Its subcellular location is the cytoplasm. The catalysed reaction is 3-methyl-2-oxobutanoate + (6R)-5,10-methylene-5,6,7,8-tetrahydrofolate + H2O = 2-dehydropantoate + (6S)-5,6,7,8-tetrahydrofolate. It participates in cofactor biosynthesis; coenzyme A biosynthesis. Functionally, catalyzes the reversible reaction in which hydroxymethyl group from 5,10-methylenetetrahydrofolate is transferred onto alpha-ketoisovalerate to form ketopantoate. This Cenarchaeum symbiosum (strain A) protein is 3-methyl-2-oxobutanoate hydroxymethyltransferase.